We begin with the raw amino-acid sequence, 796 residues long: ATP-dependent DNA helicase PIF6 (796 aa).

Positions 197–230 (RPTGLPSAHSGGKLPKHMGGDELNPQLEGSTTPG) are disordered. 255–262 (GSAGTGKT) is a binding site for ATP. The DNA-binding element occupies 636–655 (QAYVALSRVRSREDLMLTAF). Disordered stretches follow at residues 692-719 (KGKT…PEEH) and 762-796 (TSSA…VDDD).

It belongs to the helicase family. PIF1 subfamily. In terms of assembly, monomer. Requires Mg(2+) as cofactor.

It is found in the nucleus. It carries out the reaction Couples ATP hydrolysis with the unwinding of duplex DNA at the replication fork by translocating in the 5'-3' direction. This creates two antiparallel DNA single strands (ssDNA). The leading ssDNA polymer is the template for DNA polymerase III holoenzyme which synthesizes a continuous strand.. The catalysed reaction is ATP + H2O = ADP + phosphate + H(+). Its function is as follows. DNA-dependent ATPase and 5'-3' DNA helicase required for the maintenance of genome stability. This is ATP-dependent DNA helicase PIF6 from Trypanosoma brucei brucei (strain 927/4 GUTat10.1).